The chain runs to 279 residues: Acyl-[acyl-carrier-protein]--UDP-N-acetylglucosamine O-acyltransferase (279 aa).

It belongs to the transferase hexapeptide repeat family. LpxA subfamily. In terms of assembly, homotrimer.

The protein resides in the cytoplasm. The enzyme catalyses a (3R)-hydroxyacyl-[ACP] + UDP-N-acetyl-alpha-D-glucosamine = a UDP-3-O-[(3R)-3-hydroxyacyl]-N-acetyl-alpha-D-glucosamine + holo-[ACP]. The protein operates within glycolipid biosynthesis; lipid IV(A) biosynthesis; lipid IV(A) from (3R)-3-hydroxytetradecanoyl-[acyl-carrier-protein] and UDP-N-acetyl-alpha-D-glucosamine: step 1/6. Involved in the biosynthesis of lipid A, a phosphorylated glycolipid that anchors the lipopolysaccharide to the outer membrane of the cell. This is Acyl-[acyl-carrier-protein]--UDP-N-acetylglucosamine O-acyltransferase from Chlamydia pneumoniae (Chlamydophila pneumoniae).